Reading from the N-terminus, the 324-residue chain is Polyphosphate glucokinase (324 aa).

Positions 53–79 (TSTDATADTPRTSPPSDTAGTTSRHRG) are disordered. The segment covering 62 to 74 (PRTSPPSDTAGTT) has biased composition (polar residues). 83-88 (DIGGSS) contributes to the ATP binding site.

Belongs to the ROK (NagC/XylR) family. In terms of assembly, homodimer.

The catalysed reaction is [phosphate](n) + D-glucose = [phosphate](n-1) + D-glucose 6-phosphate + H(+). It catalyses the reaction D-glucose + ATP = D-glucose 6-phosphate + ADP + H(+). Functionally, catalyzes the phosphorylation of glucose using polyphosphate or ATP as the phosphoryl donor. This Mycobacterium leprae (strain TN) protein is Polyphosphate glucokinase (ppgK).